Consider the following 470-residue polypeptide: Protein naked cuticle homolog 1 (470 aa).

Disordered stretches follow at residues 1-21 (MGKLHSKPAAVCKRRESPEGD) and 90-114 (PPEKTDGLGSGDEKKMERVSEPCPG). Gly-2 carries N-myristoyl glycine lipidation. A compositionally biased stretch (basic and acidic residues) spans 92–109 (EKTDGLGSGDEKKMERVS). Residues 125–190 (QCDVSMEEDS…LRVKLTVAPD (66 aa)) form an interaction with DVL1, DVL2 and DVL3 region. One can recognise an EF-hand domain in the interval 131-166 (EEDSRQEWTFTLYDFDNNGKVTREDITSLLHTIYEV). Asp-144, Asp-146, Asn-148, Lys-150, and Asp-155 together coordinate Ca(2+). Polar residues predominate over residues 192-205 (SQSKRSVLVNQADL). Disordered stretches follow at residues 192 to 228 (SQSKRSVLVNQADLQSARPRAETKPTEDLRSWEKKQR), 271 to 314 (QFGP…QGVD), 337 to 357 (GTQDGSKHFVRSPKAQGKSVG), and 446 to 470 (GQPVQRHEHHHHHEHHHHYHHFYQT). The segment covering 210–227 (PRAETKPTEDLRSWEKKQ) has biased composition (basic and acidic residues). The span at 271–281 (QFGPGSPSVAQ) shows a compositional bias: polar residues. Basic residues predominate over residues 452 to 470 (HEHHHHHEHHHHYHHFYQT).

It belongs to the NKD family. In terms of assembly, interacts with DVL1, DVL2, DVL3 and PPP2R3A. Expressed in colon, heart, kidney, leukocyte, liver, lung, ovary, pancreas, placenta, prostate, skeletal muscle, small intestine and spleen.

The protein resides in the cell membrane. It is found in the cytoplasm. In terms of biological role, cell autonomous antagonist of the canonical Wnt signaling pathway. May activate a second Wnt signaling pathway that controls planar cell polarity. In Homo sapiens (Human), this protein is Protein naked cuticle homolog 1 (NKD1).